The sequence spans 334 residues: MKEIIEKLAKFENLSGVEMTDVIERIVTGRVTEAQIASLLLALKMKGETPEERTAIARVMRGHAQHIPTEIHDAMDNCGTGGDKSFSFNISTTAAFVLAGGGIHMAKHGNRSISSKSGSADVLEALGINLDLKPAELGKVFDKTGIVFLFAKNMHPAMKYIMPARLELGIPTIMNLTGPLIHPMALETQLLGISRPELLESTAQVLKNMGRKRAIVVAGPEGLDEAGLNGTTKIALLENGEISLSSFTPEDLGMEGYAMEDIRGGNAQENAEILLSVLKNEASPFLETTVLNAGLGFYANGKIDSIKEGVALARQVIARGKALEKLRLLQEYQK.

Residues Gly-79, Gly-82–Asp-83, Ser-87, Asn-89–Thr-92, Lys-107–Ser-115, and Ser-119 each bind 5-phospho-alpha-D-ribose 1-diphosphate. Gly-79 serves as a coordination point for anthranilate. A Mg(2+)-binding site is contributed by Ser-91. Asn-110 provides a ligand contact to anthranilate. Arg-165 contributes to the anthranilate binding site. Mg(2+)-binding residues include Asp-224 and Glu-225.

This sequence belongs to the anthranilate phosphoribosyltransferase family. As to quaternary structure, homodimer. Mg(2+) is required as a cofactor.

It carries out the reaction N-(5-phospho-beta-D-ribosyl)anthranilate + diphosphate = 5-phospho-alpha-D-ribose 1-diphosphate + anthranilate. Its pathway is amino-acid biosynthesis; L-tryptophan biosynthesis; L-tryptophan from chorismate: step 2/5. In terms of biological role, catalyzes the transfer of the phosphoribosyl group of 5-phosphorylribose-1-pyrophosphate (PRPP) to anthranilate to yield N-(5'-phosphoribosyl)-anthranilate (PRA). In Streptococcus pneumoniae serotype 19F (strain G54), this protein is Anthranilate phosphoribosyltransferase.